The following is a 395-amino-acid chain: Beta-1,4-galactosyltransferase 3 (395 aa).

Residues M1–C10 are Cytoplasmic-facing. Residues T11–F31 form a helical; Signal-anchor for type II membrane protein membrane-spanning segment. The Lumenal portion of the chain corresponds to R32–H395. The N-linked (GlcNAc...) asparagine glycan is linked to N57. C79 and C121 are disulfide-bonded. P132 to R136 provides a ligand contact to UDP-alpha-D-galactose. N-linked (GlcNAc...) asparagine glycosylation occurs at N168. UDP-alpha-D-galactose contacts are provided by residues F171–R173, V198–D199, Y228, and W260. C192 and C211 are oxidised to a cystine. D199 serves as a coordination point for Mn(2+). N-acetyl-D-glucosamine is bound at residue G262 to D265. Residue H293 coordinates Mn(2+). Position 293–295 (H293–G295) interacts with UDP-alpha-D-galactose. R305 lines the N-acetyl-D-glucosamine pocket. N339 and N387 each carry an N-linked (GlcNAc...) asparagine glycan. A disordered region spans residues T341–H395.

This sequence belongs to the glycosyltransferase 7 family. Requires Mn(2+) as cofactor.

It localises to the golgi apparatus. Its subcellular location is the golgi stack membrane. The enzyme catalyses an N-acetyl-beta-D-glucosaminyl derivative + UDP-alpha-D-galactose = a beta-D-galactosyl-(1-&gt;4)-N-acetyl-beta-D-glucosaminyl derivative + UDP + H(+). It catalyses the reaction N-acetyl-D-glucosamine + UDP-alpha-D-galactose = beta-D-galactosyl-(1-&gt;4)-N-acetyl-D-glucosamine + UDP + H(+). The catalysed reaction is a beta-D-GlcNAc-(1-&gt;3)-beta-D-Gal-(1-&gt;4)-beta-D-Glc-(1&lt;-&gt;1)-Cer(d18:1(4E)) + UDP-alpha-D-galactose = a neolactoside nLc4Cer(d18:1(4E)) + UDP + H(+). It carries out the reaction a beta-D-glucosylceramide + UDP-alpha-D-galactose = a beta-D-galactosyl-(1-&gt;4)-beta-D-glucosyl-(1&lt;-&gt;1)-ceramide + UDP + H(+). The enzyme catalyses a neolactoside IV(3)-beta-GlcNAc-nLc4Cer + UDP-alpha-D-galactose = a neolactoside nLc6Cer + UDP + H(+). The protein operates within protein modification; protein glycosylation. Functionally, responsible for the synthesis of complex-type N-linked oligosaccharides in many glycoproteins as well as the carbohydrate moieties of glycolipids. In Rattus norvegicus (Rat), this protein is Beta-1,4-galactosyltransferase 3.